Here is a 623-residue protein sequence, read N- to C-terminus: Putative pentatricopeptide repeat-containing protein At3g11460, mitochondrial (623 aa).

The N-terminal 35 residues, 1–35 (MIVVTSFVRNSAVAAVASTPWNVRLRELAYQSLFS), are a transit peptide targeting the mitochondrion. 12 PPR repeats span residues 17–51 (ASTP…GSSP), 52–86 (DAFS…GCET), 87–117 (EPFV…NPQS), 120–154 (LSVC…GVSV), 155–189 (DSVT…GLDS), 190–220 (EVAV…MPVK), 221–255 (GLIT…GVCP), 256–290 (DPFT…GFVP), 291–321 (NVFV…MPVK), 322–356 (SLVS…GIRP), 357–387 (DGAV…MKRE), and 393–423 (GPEH…MPVE). Residues 428–503 (VWGALLGACK…KPGYSYVEHK (76 aa)) form a type E motif region. A type E(+) motif region spans residues 504-535 (GRVHLFLAGDRSHEQTEEVHRMLDELETSVME). Residues 536 to 623 (LAGNMDCDRG…DGVCSCKDYW (88 aa)) are type DYW motif.

This sequence belongs to the PPR family. PCMP-H subfamily. Interacts with MORF8/RIP1.

The protein resides in the mitochondrion. Involved in C-to-U editing of mitochondrial RNA. Required specifically for editing the mitochondrial NAD2 transcript. This Arabidopsis thaliana (Mouse-ear cress) protein is Putative pentatricopeptide repeat-containing protein At3g11460, mitochondrial (PCMP-H52).